We begin with the raw amino-acid sequence, 399 residues long: S-adenosylmethionine synthase (399 aa).

Residue His-15 participates in ATP binding. Residue Asp-17 participates in Mg(2+) binding. A K(+)-binding site is contributed by Glu-43. 2 residues coordinate L-methionine: Glu-56 and Gln-99. The segment at 99 to 109 (QSPDIARGVNR) is flexible loop. ATP is bound by residues 166–168 (DAK), 232–233 (RF), Asp-241, 247–248 (RK), Ala-264, and Lys-268. An L-methionine-binding site is contributed by Asp-241. Lys-272 serves as a coordination point for L-methionine.

It belongs to the AdoMet synthase family. Homotetramer; dimer of dimers. It depends on Mg(2+) as a cofactor. K(+) serves as cofactor.

It localises to the cytoplasm. The catalysed reaction is L-methionine + ATP + H2O = S-adenosyl-L-methionine + phosphate + diphosphate. It participates in amino-acid biosynthesis; S-adenosyl-L-methionine biosynthesis; S-adenosyl-L-methionine from L-methionine: step 1/1. In terms of biological role, catalyzes the formation of S-adenosylmethionine (AdoMet) from methionine and ATP. The overall synthetic reaction is composed of two sequential steps, AdoMet formation and the subsequent tripolyphosphate hydrolysis which occurs prior to release of AdoMet from the enzyme. This Nitrosospira multiformis (strain ATCC 25196 / NCIMB 11849 / C 71) protein is S-adenosylmethionine synthase.